Reading from the N-terminus, the 368-residue chain is WD repeat-containing protein RUP2 (368 aa).

WD repeat units lie at residues 38–77, 97–138, 141–184, 192–232, 236–276, 279–318, and 330–368; these read SASD…RNNA, CTPA…PVFE, EHGG…EESV, ICRS…DPAL, GHTK…RTYE, VNNR…PVWV, and SDKR…KRKP.

Interacts with UVR8.

It is found in the nucleus. The protein localises to the cytoplasm. The protein resides in the cytosol. Its function is as follows. Functions in association with RUP1 as repressor of UV-B-induced photomorphogenesis mediated by UVR8 and HY5. Plays a crucial negative feedback regulatory role downstream of UVR8-COP1 to inhibit UVR8 function, balance UV-B-specific responses and ensure normal plant growth. Is involved in the regulation of photoperiodic flowering and vegetative development. May act as negative regulator of photoperiodic flowering by suppressing flowering through the action of CONSTANS (CO) and FLOWERING LOCUS T (FT). The sequence is that of WD repeat-containing protein RUP2 (RUP2) from Arabidopsis thaliana (Mouse-ear cress).